The sequence spans 94 residues: Small ribosomal subunit protein uS17 (94 aa).

Belongs to the universal ribosomal protein uS17 family. In terms of assembly, part of the 30S ribosomal subunit.

One of the primary rRNA binding proteins, it binds specifically to the 5'-end of 16S ribosomal RNA. The polypeptide is Small ribosomal subunit protein uS17 (Streptomyces griseus subsp. griseus (strain JCM 4626 / CBS 651.72 / NBRC 13350 / KCC S-0626 / ISP 5235)).